A 157-amino-acid chain; its full sequence is UPF0251 protein CLK_0815 (157 aa).

This sequence belongs to the UPF0251 family.

The sequence is that of UPF0251 protein CLK_0815 from Clostridium botulinum (strain Loch Maree / Type A3).